We begin with the raw amino-acid sequence, 101 residues long: Small ribosomal subunit protein eS24 (101 aa).

The protein belongs to the eukaryotic ribosomal protein eS24 family.

This is Small ribosomal subunit protein eS24 from Methanosarcina mazei (strain ATCC BAA-159 / DSM 3647 / Goe1 / Go1 / JCM 11833 / OCM 88) (Methanosarcina frisia).